An 838-amino-acid polypeptide reads, in one-letter code: Multiphosphoryl transfer protein (838 aa).

Residues 7 to 147 form the PTS EIIA type-2 domain; sequence APVTPDLVRL…AVIVAALTGD (141 aa). The Tele-phosphohistidine intermediate; for EIIA activity role is filled by H67. The residue at position 67 (H67) is a Phosphohistidine; by HPr. One can recognise an HPr domain in the interval 161–253; it reads AERFEWTIAY…LTAQEKADAE (93 aa). Catalysis depends on H175, which acts as the Pros-phosphohistidine intermediate; for HPr activity. A Phosphohistidine; by EI modification is found at H175. The PTS EI stretch occupies residues 274–838; that stretch reads AIVGIGASPG…ALEAQREGQA (565 aa). Residue H460 is the Tele-phosphohistidine intermediate; for PTS EI activity of the active site. Phosphohistidine; by autocatalysis is present on H460. R567 and R603 together coordinate phosphoenolpyruvate. E697 and D721 together coordinate Mg(2+). Phosphoenolpyruvate is bound by residues 720 to 721 and R731; that span reads ND. The active-site Proton donor is C768.

It belongs to the PEP-utilizing enzyme family. Mg(2+) is required as a cofactor.

It localises to the cytoplasm. The enzyme catalyses L-histidyl-[protein] + phosphoenolpyruvate = N(pros)-phospho-L-histidyl-[protein] + pyruvate. The phosphoenolpyruvate-dependent sugar phosphotransferase system (sugar PTS), a major carbohydrate active transport system, catalyzes the phosphorylation of incoming sugar substrates concomitantly with their translocation across the cell membrane. The enzyme II FruAB PTS system is involved in fructose transport. The sequence is that of Multiphosphoryl transfer protein from Xanthomonas campestris pv. campestris (strain ATCC 33913 / DSM 3586 / NCPPB 528 / LMG 568 / P 25).